We begin with the raw amino-acid sequence, 1759 residues long: Protein TIC 214 (1759 aa).

5 helical membrane passes run 23–45 (VVVG…LFLL), 64–84 (FITG…HLAL), 129–149 (IFFQ…SSIF), 172–192 (IGWI…LICI), and 221–241 (IFVV…PPPF).

Belongs to the TIC214 family. In terms of assembly, part of the Tic complex.

The protein resides in the plastid. Its subcellular location is the chloroplast inner membrane. Functionally, involved in protein precursor import into chloroplasts. May be part of an intermediate translocation complex acting as a protein-conducting channel at the inner envelope. This chain is Protein TIC 214, found in Phaseolus vulgaris (Kidney bean).